A 163-amino-acid chain; its full sequence is NADH-quinone oxidoreductase subunit I (163 aa).

2 4Fe-4S ferredoxin-type domains span residues 53–83 (LRRY…IEAG) and 94–123 (VRYD…EGPN). [4Fe-4S] cluster-binding residues include Cys-63, Cys-66, Cys-69, Cys-73, Cys-103, Cys-106, Cys-109, and Cys-113.

The protein belongs to the complex I 23 kDa subunit family. In terms of assembly, NDH-1 is composed of 14 different subunits. Subunits NuoA, H, J, K, L, M, N constitute the membrane sector of the complex. [4Fe-4S] cluster serves as cofactor.

The protein resides in the cell inner membrane. It catalyses the reaction a quinone + NADH + 5 H(+)(in) = a quinol + NAD(+) + 4 H(+)(out). NDH-1 shuttles electrons from NADH, via FMN and iron-sulfur (Fe-S) centers, to quinones in the respiratory chain. The immediate electron acceptor for the enzyme in this species is believed to be ubiquinone. Couples the redox reaction to proton translocation (for every two electrons transferred, four hydrogen ions are translocated across the cytoplasmic membrane), and thus conserves the redox energy in a proton gradient. The sequence is that of NADH-quinone oxidoreductase subunit I from Chelativorans sp. (strain BNC1).